The chain runs to 257 residues: Aspartate/glutamate leucyltransferase (257 aa).

The protein belongs to the R-transferase family. Bpt subfamily.

It is found in the cytoplasm. The enzyme catalyses N-terminal L-glutamyl-[protein] + L-leucyl-tRNA(Leu) = N-terminal L-leucyl-L-glutamyl-[protein] + tRNA(Leu) + H(+). The catalysed reaction is N-terminal L-aspartyl-[protein] + L-leucyl-tRNA(Leu) = N-terminal L-leucyl-L-aspartyl-[protein] + tRNA(Leu) + H(+). In terms of biological role, functions in the N-end rule pathway of protein degradation where it conjugates Leu from its aminoacyl-tRNA to the N-termini of proteins containing an N-terminal aspartate or glutamate. The sequence is that of Aspartate/glutamate leucyltransferase from Sphingopyxis alaskensis (strain DSM 13593 / LMG 18877 / RB2256) (Sphingomonas alaskensis).